The following is a 972-amino-acid chain: UvrABC system protein A (972 aa).

An ATP-binding site is contributed by 32-39 (GLSGSGKS). The C4-type; atypical zinc-finger motif lies at 257–285 (CPNGHALAVDDLEPRSFSFNSPYGACPEC). 2 ABC transporter domains span residues 315-601 (WSNG…KDSI) and 621-950 (VDPR…KFLA). Residue 654-661 (GVSGSGKS) coordinates ATP. The C4-type zinc finger occupies 753 to 779 (CEACTGDGTIKIEMNFLPDVYVPCEVC).

The protein belongs to the ABC transporter superfamily. UvrA family. In terms of assembly, forms a heterotetramer with UvrB during the search for lesions.

The protein localises to the cytoplasm. In terms of biological role, the UvrABC repair system catalyzes the recognition and processing of DNA lesions. UvrA is an ATPase and a DNA-binding protein. A damage recognition complex composed of 2 UvrA and 2 UvrB subunits scans DNA for abnormalities. When the presence of a lesion has been verified by UvrB, the UvrA molecules dissociate. The chain is UvrABC system protein A from Mycobacterium bovis (strain ATCC BAA-935 / AF2122/97).